Reading from the N-terminus, the 953-residue chain is Catenin alpha-2 (953 aa).

Thr632 is subject to Phosphothreonine. A phosphoserine mark is found at Ser640, Ser651, and Ser901. Over residues 912-927 (EKKPLVKREKPEEFQT) the composition is skewed to basic and acidic residues. The disordered stretch occupies residues 912-939 (EKKPLVKREKPEEFQTRVRRGSQKKHIS). Over residues 928–938 (RVRRGSQKKHI) the composition is skewed to basic residues. Ser939 carries the post-translational modification Phosphoserine.

Belongs to the vinculin/alpha-catenin family. Interacts with CDH1 and CDH2. Interacts with ZNF639; recruits CTNNA2 to the nucleus. Interacts with F-actin. As to expression, expressed in neural tissues, with strongest expression in fetal and adult brain. Expressed in the developing cortical plate and marginal zone of 20-week-old human fetal brain.

It is found in the cell membrane. The protein resides in the cytoplasm. The protein localises to the cytoskeleton. Its subcellular location is the cell junction. It localises to the adherens junction. It is found in the cell projection. The protein resides in the axon. The protein localises to the nucleus. Its function is as follows. May function as a linker between cadherin adhesion receptors and the cytoskeleton to regulate cell-cell adhesion and differentiation in the nervous system. Required for proper regulation of cortical neuronal migration and neurite growth. It acts as a negative regulator of Arp2/3 complex activity and Arp2/3-mediated actin polymerization. It thereby suppresses excessive actin branching which would impair neurite growth and stability. Regulates morphological plasticity of synapses and cerebellar and hippocampal lamination during development. Functions in the control of startle modulation. In Homo sapiens (Human), this protein is Catenin alpha-2 (CTNNA2).